Here is a 204-residue protein sequence, read N- to C-terminus: Protein Nef (204 aa).

A disordered region spans residues 1–33 (MGGKWSKRRAEGWQTIRERMRRAEPAEPAADGV). G2 carries the N-myristoyl glycine; by host lipid modification. S6 is modified (phosphoserine; by host). A compositionally biased stretch (basic and acidic residues) spans 8 to 25 (RRAEGWQTIRERMRRAEP). The acidic; interacts with host PACS1 and PACS2; stabilizes the interaction of NEF/MHC-I with host AP1M1; necessary for MHC-I internalization stretch occupies residues 63 to 66 (EEGE). The segment at 70-79 (PVRPQVPLRP) is SH3-binding; interaction with Src family tyrosine kinases. A PxxP; stabilizes the interaction of NEF/MHC-I with host AP1M1; necessary for MHC-I internalization motif is present at residues 73-76 (PQVP). A mediates dimerization, Nef-PTE1 interaction region spans residues 109-125 (DILDLWVYHTQGFFPDW). The tract at residues 149–179 (VEPDEGENNREDNSLLHPANQHGVEDSERQV) is binding to ATP6V1H. Positions 163 to 164 (LL) match the Dileucine internalization motif; necessary for CD4 internalization motif. The Diacidic; necessary for CD4 internalization motif lies at 173–174 (ED).

This sequence belongs to the lentivirus primate group Nef protein family. As to quaternary structure, monomer; cytosolic form. Homodimer; membrane bound form. Interacts with Nef associated p21-activated kinase (PAK2); this interaction activates PAK2. Associates with the Nef-MHC-I-AP1 complex; this complex is required for MHC-I internalization. Interacts (via C-terminus) with host PI3-kinase. Interacts with host PACS1; this interaction seems to be weak. Interacts with host PACS2. Interacts with host LCK and MAPK3; these interactions inhibit the kinase activity of the latter. Interacts with host ATP6V1H; this interaction may play a role in CD4 endocytosis. Associates with the CD4-Nef-AP2 complex; this complex is required for CD4 internalization. Interacts with host AP2 subunit alpha and AP2 subunit sigma2. Interacts with TCR-zeta chain; this interaction up-regulates the Fas ligand (FasL) surface expression. Interacts with host HCK, LYN, and SRC; these interactions activate the Src family kinases. Interacts with MAP3K5; this interaction inhibits the Fas and TNFR-mediated death signals. Interacts with beta-COP and PTE1. Interacts with human RACK1; this increases Nef phosphorylation by PKC. Interacts with TP53; this interaction decreases the half-life of TP53, protecting the infected cell against p53-mediated apoptosis. The virion-associated Nef proteins are cleaved by the viral protease to release the soluble C-terminal core protein. Nef is probably cleaved concomitantly with viral structural proteins on maturation of virus particles. In terms of processing, myristoylated. Post-translationally, phosphorylated on serine residues, probably by host PKCdelta and theta.

It is found in the host cell membrane. It localises to the virion. The protein resides in the secreted. The protein localises to the host Golgi apparatus membrane. In terms of biological role, factor of infectivity and pathogenicity, required for optimal virus replication. Alters numerous pathways of T-lymphocyte function and down-regulates immunity surface molecules in order to evade host defense and increase viral infectivity. Alters the functionality of other immunity cells, like dendritic cells, monocytes/macrophages and NK cells. Functionally, in infected CD4(+) T-lymphocytes, down-regulates the surface MHC-I, mature MHC-II, CD4, CD28, CCR5 and CXCR4 molecules. Mediates internalization and degradation of host CD4 through the interaction of with the cytoplasmic tail of CD4, the recruitment of AP-2 (clathrin adapter protein complex 2), internalization through clathrin coated pits, and subsequent transport to endosomes and lysosomes for degradation. Diverts host MHC-I molecules to the trans-Golgi network-associated endosomal compartments by an endocytic pathway to finally target them for degradation. MHC-I down-regulation may involve AP-1 (clathrin adapter protein complex 1) or possibly Src family kinase-ZAP70/Syk-PI3K cascade recruited by PACS2. In consequence infected cells are masked for immune recognition by cytotoxic T-lymphocytes. Decreasing the number of immune receptors also prevents reinfection by more HIV particles (superinfection). Down-regulates host SERINC3 and SERINC5 thereby excluding these proteins from the viral particles. Virion infectivity is drastically higher when SERINC3 or SERINC5 are excluded from the viral envelope, because these host antiviral proteins impair the membrane fusion event necessary for subsequent virion penetration. Bypasses host T-cell signaling by inducing a transcriptional program nearly identical to that of anti-CD3 cell activation. Interaction with TCR-zeta chain up-regulates the Fas ligand (FasL). Increasing surface FasL molecules and decreasing surface MHC-I molecules on infected CD4(+) cells send attacking cytotoxic CD8+ T-lymphocytes into apoptosis. Its function is as follows. Plays a role in optimizing the host cell environment for viral replication without causing cell death by apoptosis. Protects the infected cells from apoptosis in order to keep them alive until the next virus generation is ready to strike. Inhibits the Fas and TNFR-mediated death signals by blocking MAP3K5/ASK1. Decreases the half-life of TP53, protecting the infected cell against p53-mediated apoptosis. Inhibits the apoptotic signals regulated by the Bcl-2 family proteins through the formation of a Nef/PI3-kinase/PAK2 complex that leads to activation of PAK2 and induces phosphorylation of host BAD. In terms of biological role, extracellular Nef protein targets CD4(+) T-lymphocytes for apoptosis by interacting with CXCR4 surface receptors. This is Protein Nef from Human immunodeficiency virus type 1 group M subtype B (strain 89.6) (HIV-1).